Consider the following 428-residue polypeptide: uncharacterized protein (428 aa).

The next 10 membrane-spanning stretches (helical) occupy residues 26-46, 51-71, 90-110, 135-155, 177-197, 223-243, 278-298, 314-334, 359-379, and 407-427; these read VALTCAAIMVGAGIVGSDDVF, AGIDWDVIFLLLGMMIIVSVL, AAPLRIMILLVLVTALGSALL, TPFLVAEVFASNVGGAATLVG, MAPAVLVVMIALIGLLPWLLG, LLIKCGVVLVLVFAAFIAHPV, TLLFFAGLFVMVGALVKTGVV, LLTVGLILGISAPVSGIIDNI, TFWWALALSADFGGNLTAVAA, and VVTAVSLVLSAVYLWLRYFVF.

Belongs to the CitM (TC 2.A.11) transporter family.

The protein localises to the cell membrane. This is an uncharacterized protein from Mycobacterium tuberculosis (strain CDC 1551 / Oshkosh).